The following is a 199-amino-acid chain: COMM domain-containing protein 2 (199 aa).

The region spanning 123-190 (SYHNLEWRLD…QALEEMKTNH (68 aa)) is the COMM domain.

It belongs to the COMM domain-containing protein 2 family. Component of the commander complex consisting of the CCC subcomplex and the retriever subcomplex. Component of the CCC (COMMD/CCDC22/CCDC93) subcomplex consisting of COMMD1, COMMD2, COMMD3, COMMD4, COMMD5, COMMD6, COMMD7, COMMD8, COMMD9, COMMD10, CCDC22 and CCDC93; within the complex forms a heterodimer with COMMD3. Interacts with RELA, RELB, NFKB1/p105, NFKB2/p100. Interacts with CCDC22, CCDC93, SCNN1B, CUL3, CUL4B, CUL5, CUL7. As to expression, ubiquitous.

The protein localises to the cytoplasm. Scaffold protein in the commander complex that is essential for endosomal recycling of transmembrane cargos; the commander complex is composed of the CCC subcomplex and the retriever subcomplex. May modulate activity of cullin-RING E3 ubiquitin ligase (CRL) complexes. May down-regulate activation of NF-kappa-B. This is COMM domain-containing protein 2 (COMMD2) from Homo sapiens (Human).